A 988-amino-acid chain; its full sequence is Isoleucine--tRNA ligase (988 aa).

The 'HIGH' region signature appears at 60 to 70; that stretch reads PYANGALHMGH. An L-isoleucyl-5'-AMP-binding site is contributed by Glu570. The 'KMSKS' region signature appears at 611–615; sequence KMSKS. Residue Lys614 participates in ATP binding. Residues Cys957, Cys960, Cys977, and Cys980 each coordinate Zn(2+).

It belongs to the class-I aminoacyl-tRNA synthetase family. IleS type 1 subfamily. Monomer. Zn(2+) is required as a cofactor.

It is found in the cytoplasm. It carries out the reaction tRNA(Ile) + L-isoleucine + ATP = L-isoleucyl-tRNA(Ile) + AMP + diphosphate. In terms of biological role, catalyzes the attachment of isoleucine to tRNA(Ile). As IleRS can inadvertently accommodate and process structurally similar amino acids such as valine, to avoid such errors it has two additional distinct tRNA(Ile)-dependent editing activities. One activity is designated as 'pretransfer' editing and involves the hydrolysis of activated Val-AMP. The other activity is designated 'posttransfer' editing and involves deacylation of mischarged Val-tRNA(Ile). This is Isoleucine--tRNA ligase from Synechocystis sp. (strain ATCC 27184 / PCC 6803 / Kazusa).